The chain runs to 418 residues: Transmembrane protease serine 11D (418 aa).

The Cytoplasmic segment spans residues 1 to 20 (MYRPARVTSTSRFLNPYVVC). A helical; Signal-anchor for type II membrane protein membrane pass occupies residues 21 to 41 (FIVVAGVVILAVTIALLVYFL). Over 42 to 418 (AFDQKSYFYR…LDWIRQQTGI (377 aa)) the chain is Extracellular. Residues 46–163 (KSYFYRSSFQ…STEITSLTDQ (118 aa)) form the SEA domain. Asn-144 carries an N-linked (GlcNAc...) asparagine glycan. Disulfide bonds link Cys-173/Cys-292, Cys-212/Cys-228, Cys-337/Cys-353, and Cys-364/Cys-393. The Peptidase S1 domain occupies 187–417 (ILGGTEAEEG…YLDWIRQQTG (231 aa)). Catalysis depends on charge relay system residues His-227 and Asp-272. Ser-368 functions as the Charge relay system in the catalytic mechanism.

It belongs to the peptidase S1 family. Monomer. In terms of tissue distribution, located in the cells of the submucosal serous glands of the bronchi and trachea.

It is found in the cell membrane. It localises to the secreted. Strongly inhibited by diisopropyl fluorophosphate, leupeptin, antipain, aprotinin, and soybean trypsin inhibitor, but hardly inhibited by secretory leukocyte protease inhibitor at 10 microM. Functionally, may play some biological role in the host defense system on the mucous membrane independently of or in cooperation with other substances in airway mucous or bronchial secretions. Plays a role in the proteolytic processing of ACE2. Proteolytically cleaves and activates the human coronavirus 229E (HCoV-229E) spike glycoprotein which facilitate virus-cell membrane fusions; spike proteins are synthesized and maintained in precursor intermediate folding states and proteolysis permits the refolding and energy release required to create stable virus-cell linkages and membrane coalescence. Preferentially cleaves the C-terminal side of arginine residues at the P1 position of certain peptides, cleaving Boc-Phe-Ser-Arg-4-methylcoumaryl-7-amide most efficiently and having an optimum pH of 8.6 with this substrate. In Homo sapiens (Human), this protein is Transmembrane protease serine 11D (TMPRSS11D).